Reading from the N-terminus, the 433-residue chain is MTDLTPREIVSELDRFIIGQKEAKRAVAVALRNRWRRKQLADDLRDEVYPKNILMIGPTGVGKTEISRRLARLAKAPFLKVEATKFTEVGYVGRDVDSIIRDLVDAAIVETRARMREDVKARAAKAAEDRVIEAVAGRDAREQTREMFRGKLKRGELDNTVIEIDVADTSNPMQMLDPTGQGQMGMMNLGEIFGKAFGGRTQRRKMTVAESHDILMNEEADKLLDDEVVKAAALEAVQQNGIVFIDEIDKVCARSDMRGADVSREGVQRDLLPLIEGTTVSTKYGPVKTDHILFIASGAFHIAKPSDLLPELQGRLPIRVELRALTEEDFVRILSETDNALTLQYKALMQTEKVGITFTEDGIAALASIAAEVNRSVENIGARRLYTVMERVFEELSFHAPDRSGEEVTVDAAYVEKNLGELARSSDLSRYVL.

ATP contacts are provided by residues I18, 60–65 (GVGKTE), D246, E311, and R383.

It belongs to the ClpX chaperone family. HslU subfamily. As to quaternary structure, a double ring-shaped homohexamer of HslV is capped on each side by a ring-shaped HslU homohexamer. The assembly of the HslU/HslV complex is dependent on binding of ATP.

Its subcellular location is the cytoplasm. ATPase subunit of a proteasome-like degradation complex; this subunit has chaperone activity. The binding of ATP and its subsequent hydrolysis by HslU are essential for unfolding of protein substrates subsequently hydrolyzed by HslV. HslU recognizes the N-terminal part of its protein substrates and unfolds these before they are guided to HslV for hydrolysis. The protein is ATP-dependent protease ATPase subunit HslU of Cereibacter sphaeroides (strain KD131 / KCTC 12085) (Rhodobacter sphaeroides).